The sequence spans 1809 residues: Pyochelin synthetase PchF (1809 aa).

Residues 69-490 (FPLTPVQAAY…GLLRRLAQSP (422 aa)) form a condensation/cyclization region. Residues 520–915 (FAERALLTPD…GREDDQVKIR (396 aa)) form an adenylation region. The Carrier domain maps to 1407–1488 (APADELESAL…GLAERLRSAP (82 aa)). Ser1442 carries the O-(pantetheine 4'-phosphoryl)serine modification. The thioesterase stretch occupies residues 1584–1797 (LGRRYAEALH…FDCLGEALAQ (214 aa)).

This sequence belongs to the NRP synthetase family. Pantetheine 4'-phosphate serves as cofactor.

The enzyme catalyses holo-[peptidyl-carrier protein] + L-cysteine + ATP = L-cysteinyl-[peptidyl-carrier protein] + AMP + diphosphate. It functions in the pathway siderophore biosynthesis. Functionally, involved in the biosynthesis of the siderophore pyochelin. Adenylates L-cysteine and loads it onto its peptidyl carrier domain via a thioester linkage to the phosphopanthetheine moiety. Then forms a peptide bond between the salicyl-thiazolinyl intermediate bound to the second carrier domain of PchE and the cysteine bound to its own peptidyl carrier domain to form the salicyl-thiazolinyl-cysteinyl-S-PCP2 intermediate. It subsequently cyclizes the C-terminal cysteine to form the second thiazoline heterocycle in the salicyl-thiazolinyl-thiazolinyl-S-PCP2 intermediate. When this intermediate is released by the action of a thioesterase, it produces the tricyclic acid hydroxyphenyl-thiazolyl-thiazolinyl-carboxylic acid (HPTT-COOH), an advanced intermediate containing the aryl-4,2-bis-heterocyclic skeleton of the bithiazoline class of siderophores. This Pseudomonas aeruginosa (strain UCBPP-PA14) protein is Pyochelin synthetase PchF.